We begin with the raw amino-acid sequence, 155 residues long: Egg-lysin (155 aa).

Residues 1–18 (MKLLVLCLFAMMATLAVS) form the signal peptide.

Monomer. Homodimer. Molecules associate into dimers and then rapidly dissociate again. Interacts (as a monomer) with the egg vitelline layer protein VERL (via VERL repeats); each VERL chain can bind multiple copies of lysin. In terms of tissue distribution, sperm (at protein level).

It is found in the cytoplasmic vesicle. Its subcellular location is the secretory vesicle. The protein resides in the acrosome lumen. Creates a 3 um hole in the egg vitelline layer through which the sperm passes. Does not have enzyme activity. Species-specific interaction between the sperm protein lysin and the egg protein VERL exposes a basic surface on lysin that may dissociate the egg vitelline layer via electrostatic repulsion. Plays a role in ensuring species-specific fertilization. This Haliotis corrugata (Pink abalone) protein is Egg-lysin.